A 66-amino-acid polypeptide reads, in one-letter code: Large ribosomal subunit protein bL35c (66 aa).

Belongs to the bacterial ribosomal protein bL35 family.

The protein localises to the plastid. It is found in the chloroplast. The protein is Large ribosomal subunit protein bL35c of Guillardia theta (Cryptophyte).